Reading from the N-terminus, the 133-residue chain is Small ribosomal subunit protein uS11 (133 aa).

The protein belongs to the universal ribosomal protein uS11 family. Part of the 30S ribosomal subunit. Interacts with proteins S7 and S18. Binds to IF-3.

In terms of biological role, located on the platform of the 30S subunit, it bridges several disparate RNA helices of the 16S rRNA. Forms part of the Shine-Dalgarno cleft in the 70S ribosome. This is Small ribosomal subunit protein uS11 from Shouchella clausii (strain KSM-K16) (Alkalihalobacillus clausii).